The following is a 447-amino-acid chain: GTPase Der (447 aa).

EngA-type G domains lie at 2–166 (YRVA…PEYE) and 183–358 (IKVA…NQSW). GTP-binding positions include 8–15 (GRPNVGKS), 55–59 (DTGGY), 118–121 (NKID), 189–196 (GKPNAGKS), 236–240 (DTAGL), and 301–304 (NKID). The KH-like domain occupies 359 to 443 (KRVGTGQLNR…PIKLLLRGKE (85 aa)).

The protein belongs to the TRAFAC class TrmE-Era-EngA-EngB-Septin-like GTPase superfamily. EngA (Der) GTPase family. In terms of assembly, associates with the 50S ribosomal subunit.

Functionally, GTPase that plays an essential role in the late steps of ribosome biogenesis. This chain is GTPase Der, found in Persephonella marina (strain DSM 14350 / EX-H1).